The chain runs to 73 residues: Antimicrobial peptide 6 (73 aa).

The signal sequence occupies residues 1–22 (MQIKHLITLFFLVLIVADQCSA). Residues 45 to 73 (EISTQIDQYRNLQKREAELEELLDRLPMY) constitute a propeptide that is removed on maturation.

This sequence belongs to the non-disulfide-bridged peptide (NDBP) superfamily. Short antimicrobial peptide (group 4) family. Expressed by the venom gland.

It is found in the secreted. Functionally, antibacterial peptide. This Tityus costatus (Brazilian scorpion) protein is Antimicrobial peptide 6.